A 127-amino-acid chain; its full sequence is Large ribosomal subunit protein bL12 (127 aa).

Belongs to the bacterial ribosomal protein bL12 family. In terms of assembly, homodimer. Part of the ribosomal stalk of the 50S ribosomal subunit. Forms a multimeric L10(L12)X complex, where L10 forms an elongated spine to which 2 to 4 L12 dimers bind in a sequential fashion. Binds GTP-bound translation factors.

In terms of biological role, forms part of the ribosomal stalk which helps the ribosome interact with GTP-bound translation factors. Is thus essential for accurate translation. This is Large ribosomal subunit protein bL12 from Phytoplasma mali (strain AT).